Here is a 219-residue protein sequence, read N- to C-terminus: 2-phospho-L-lactate guanylyltransferase (219 aa).

The protein belongs to the CofC family. Homodimer.

The catalysed reaction is (2S)-2-phospholactate + GTP + H(+) = (2S)-lactyl-2-diphospho-5'-guanosine + diphosphate. It participates in cofactor biosynthesis; coenzyme F420 biosynthesis. Functionally, guanylyltransferase that catalyzes the activation of (2S)-2-phospholactate (2-PL) as (2S)-lactyl-2-diphospho-5'-guanosine, via the condensation of 2-PL with GTP. It is involved in the biosynthesis of coenzyme F420, a hydride carrier cofactor. This chain is 2-phospho-L-lactate guanylyltransferase, found in Methanocella arvoryzae (strain DSM 22066 / NBRC 105507 / MRE50).